The primary structure comprises 162 residues: Large ribosomal subunit protein uL15 (162 aa).

Basic and acidic residues predominate over residues 1-10 (MNLNELRDNA). Residues 1–39 (MNLNELRDNAGSRYRKKRLGRGIGSGKGKTSGKGVKGQK) form a disordered region. A compositionally biased stretch (gly residues) spans 21-35 (RGIGSGKGKTSGKGV).

The protein belongs to the universal ribosomal protein uL15 family. In terms of assembly, part of the 50S ribosomal subunit.

In terms of biological role, binds to the 23S rRNA. In Gluconacetobacter diazotrophicus (strain ATCC 49037 / DSM 5601 / CCUG 37298 / CIP 103539 / LMG 7603 / PAl5), this protein is Large ribosomal subunit protein uL15.